Here is a 574-residue protein sequence, read N- to C-terminus: Serine carboxypeptidase ctsa-3.1 (574 aa).

The N-terminal stretch at 1–19 (MCRTLLGVAFLVVTVLSQG) is a signal peptide. Residues Asn-48 and Asn-163 are each glycosylated (N-linked (GlcNAc...) asparagine). Ser-172 is an active-site residue. 4 N-linked (GlcNAc...) asparagine glycosylation sites follow: Asn-241, Asn-408, Asn-414, and Asn-426. Residues Asp-441 and His-507 contribute to the active site. Asn-534 carries an N-linked (GlcNAc...) asparagine glycan.

It belongs to the peptidase S10 family.

This chain is Serine carboxypeptidase ctsa-3.1, found in Caenorhabditis elegans.